Here is a 374-residue protein sequence, read N- to C-terminus: Glutamate 5-kinase (374 aa).

Residue Lys-16 participates in ATP binding. Substrate-binding residues include Ser-56, Asp-143, and Asn-155. ATP is bound at residue 175–176; that stretch reads TD. Positions 282–360 constitute a PUA domain; the sequence is KGCFVVDEGA…TRIEEILGYV (79 aa).

It belongs to the glutamate 5-kinase family.

The protein localises to the cytoplasm. It catalyses the reaction L-glutamate + ATP = L-glutamyl 5-phosphate + ADP. Its pathway is amino-acid biosynthesis; L-proline biosynthesis; L-glutamate 5-semialdehyde from L-glutamate: step 1/2. In terms of biological role, catalyzes the transfer of a phosphate group to glutamate to form L-glutamate 5-phosphate. The protein is Glutamate 5-kinase of Methylococcus capsulatus (strain ATCC 33009 / NCIMB 11132 / Bath).